Here is a 740-residue protein sequence, read N- to C-terminus: Rho GTPase-activating protein 92B (740 aa).

The region spanning 13–246 (ENLSRSSKSD…IQDTIQGTEK (234 aa)) is the BAR domain. The disordered stretch occupies residues 49–74 (LPALSGGGGSGSGSSEEQDKRTKKNS). Positions 251-448 (TSLKEHLTST…LLISQWDYFF (198 aa)) constitute a Rho-GAP domain. A disordered region spans residues 467–740 (GKSKSNSSNE…PPPTNWKSSD (274 aa)). 2 positions are modified to phosphoserine: Ser-469 and Ser-473. Over residues 506–520 (TTNGNGIIMTTSQTS) the composition is skewed to polar residues. Over residues 566–577 (PLPPPPVTPAKP) the composition is skewed to pro residues. Position 593 is a phosphoserine (Ser-593). A Phosphothreonine modification is found at Thr-595. The segment covering 643 to 655 (TTPTQATIDNGNG) has biased composition (polar residues). The segment covering 659-672 (FKTEHFLDKLRQEN) has biased composition (basic and acidic residues). Residues 673–686 (GETNGTREVSSTTK) show a composition bias toward polar residues. A compositionally biased stretch (low complexity) spans 694–713 (PPATAADQNQQQAQPQVTTP). The residue at position 715 (Ser-715) is a Phosphoserine. Thr-721 carries the phosphothreonine modification. Pro residues predominate over residues 725-734 (PTVPAPPPPT). Ser-738 and Ser-739 each carry phosphoserine.

In terms of biological role, GTPase activator for the Rho-type GTPases by converting them to an inactive GDP-bound state. This is Rho GTPase-activating protein 92B (RhoGAP92B) from Drosophila melanogaster (Fruit fly).